Here is a 362-residue protein sequence, read N- to C-terminus: UDP-N-acetylglucosamine--N-acetylmuramyl-(pentapeptide) pyrophosphoryl-undecaprenol N-acetylglucosamine transferase (362 aa).

Residues 15-17 (TGG), N127, R165, S191, I247, 266-271 (ALTVSE), and Q292 contribute to the UDP-N-acetyl-alpha-D-glucosamine site.

The protein belongs to the glycosyltransferase 28 family. MurG subfamily.

It is found in the cell inner membrane. The enzyme catalyses di-trans,octa-cis-undecaprenyl diphospho-N-acetyl-alpha-D-muramoyl-L-alanyl-D-glutamyl-meso-2,6-diaminopimeloyl-D-alanyl-D-alanine + UDP-N-acetyl-alpha-D-glucosamine = di-trans,octa-cis-undecaprenyl diphospho-[N-acetyl-alpha-D-glucosaminyl-(1-&gt;4)]-N-acetyl-alpha-D-muramoyl-L-alanyl-D-glutamyl-meso-2,6-diaminopimeloyl-D-alanyl-D-alanine + UDP + H(+). It participates in cell wall biogenesis; peptidoglycan biosynthesis. In terms of biological role, cell wall formation. Catalyzes the transfer of a GlcNAc subunit on undecaprenyl-pyrophosphoryl-MurNAc-pentapeptide (lipid intermediate I) to form undecaprenyl-pyrophosphoryl-MurNAc-(pentapeptide)GlcNAc (lipid intermediate II). This chain is UDP-N-acetylglucosamine--N-acetylmuramyl-(pentapeptide) pyrophosphoryl-undecaprenol N-acetylglucosamine transferase, found in Shewanella sp. (strain ANA-3).